We begin with the raw amino-acid sequence, 474 residues long: MTVKTRFAPSPTGYLHVGGARTALYSWLYAKSQGGEFVLRIEDTDLERNSQEAVDAILEGMQWLGLEWNEGPYFQTQRFDRYNEMVDKLLAEDKAYKCYASKELLDEVRAEQEANKEMPRYDAEHPKIKAANEAAKDGDPCVIRFRNPKEGSVVFEDQIRGRIEISNSQMDDLIIRRTDGSPTYNFCVVVDDWDMGITHVIRGEDHINNTPRQINIYEALGAPVPTFAHCAMILGDDGAKLSKRHGAVSVMQYRDMGYLPVALNNYLVRLGWSHGDQEIFSQEEMINLFSLNAISKSASAFNTDKLLWLNNHYIKTSDPKYVAEHLQWHLDQKDIKTENGPAITDVIKLVGERCNTLVELADQIGYFYQDFDAFDADAAKKHLRGVAKQPLEVALAKVEALTEWTTENLHQVIADVCTDLEIGMGKIGMPLRVAVTGGGQSPSVDAVMQLIGKERVVARIKMALAFIAEREANA.

Positions 9 to 19 (PSPTGYLHVGG) match the 'HIGH' region motif. The short motif at 240–244 (KLSKR) is the 'KMSKS' region element. Lysine 243 contacts ATP.

Belongs to the class-I aminoacyl-tRNA synthetase family. Glutamate--tRNA ligase type 1 subfamily. As to quaternary structure, monomer.

It is found in the cytoplasm. The enzyme catalyses tRNA(Glu) + L-glutamate + ATP = L-glutamyl-tRNA(Glu) + AMP + diphosphate. Its function is as follows. Catalyzes the attachment of glutamate to tRNA(Glu) in a two-step reaction: glutamate is first activated by ATP to form Glu-AMP and then transferred to the acceptor end of tRNA(Glu). The chain is Glutamate--tRNA ligase from Vibrio vulnificus (strain YJ016).